The primary structure comprises 593 residues: NADH-quinone oxidoreductase subunit C/D (593 aa).

The segment at 1 to 184 is NADH dehydrogenase I subunit C; sequence MTTGSALYIP…DPFSLNLAKQ (184 aa). An NADH dehydrogenase I subunit D region spans residues 208-593; it reads DYMFLNLGPN…IDFVMADVDR (386 aa).

The protein in the N-terminal section; belongs to the complex I 30 kDa subunit family. This sequence in the C-terminal section; belongs to the complex I 49 kDa subunit family. In terms of assembly, NDH-1 is composed of 13 different subunits. Subunits NuoB, CD, E, F, and G constitute the peripheral sector of the complex.

It is found in the cell inner membrane. It catalyses the reaction a quinone + NADH + 5 H(+)(in) = a quinol + NAD(+) + 4 H(+)(out). NDH-1 shuttles electrons from NADH, via FMN and iron-sulfur (Fe-S) centers, to quinones in the respiratory chain. The immediate electron acceptor for the enzyme in this species is believed to be ubiquinone. Couples the redox reaction to proton translocation (for every two electrons transferred, four hydrogen ions are translocated across the cytoplasmic membrane), and thus conserves the redox energy in a proton gradient. The chain is NADH-quinone oxidoreductase subunit C/D from Pseudomonas fluorescens (strain ATCC BAA-477 / NRRL B-23932 / Pf-5).